Consider the following 304-residue polypeptide: Dihydroorotate dehydrogenase B (NAD(+)), catalytic subunit (304 aa).

FMN contacts are provided by residues serine 21 and 45-46 (KA). Substrate is bound by residues lysine 45 and 69 to 73 (NAIGL). FMN contacts are provided by asparagine 99 and asparagine 127. Asparagine 127 serves as a coordination point for substrate. Cysteine 130 acts as the Nucleophile in catalysis. FMN-binding residues include lysine 165 and isoleucine 191. 192-193 (NT) provides a ligand contact to substrate. FMN is bound by residues glycine 217, 243 to 244 (GG), and 265 to 266 (GT).

The protein belongs to the dihydroorotate dehydrogenase family. Type 1 subfamily. As to quaternary structure, heterotetramer of 2 PyrK and 2 PyrD type B subunits. The cofactor is FMN.

The protein resides in the cytoplasm. It catalyses the reaction (S)-dihydroorotate + NAD(+) = orotate + NADH + H(+). Its pathway is pyrimidine metabolism; UMP biosynthesis via de novo pathway; orotate from (S)-dihydroorotate (NAD(+) route): step 1/1. Catalyzes the conversion of dihydroorotate to orotate with NAD(+) as electron acceptor. The sequence is that of Dihydroorotate dehydrogenase B (NAD(+)), catalytic subunit (pyrD) from Shouchella clausii (strain KSM-K16) (Alkalihalobacillus clausii).